Consider the following 883-residue polypeptide: Envelope glycoprotein B (883 aa).

An N-terminal signal peptide occupies residues 1 to 31 (MQSYIAVNIDMASLKMLICVCVAILIPSTLS). The Virion surface segment spans residues 32-750 (QDSHGIGWNN…SGIASFLSNP (719 aa)). 5 cysteine pairs are disulfide-bonded: cysteine 77-cysteine 535, cysteine 94-cysteine 491, cysteine 167-cysteine 229, cysteine 321-cysteine 369, and cysteine 558-cysteine 608. Residues asparagine 102 and asparagine 121 are each glycosylated (N-linked (GlcNAc...) asparagine; by host). An involved in fusion and/or binding to host membrane region spans residues 134-140 (TWALFSR). An N-linked (GlcNAc...) asparagine; by host glycan is attached at asparagine 211. The involved in fusion and/or binding to host membrane stretch occupies residues 216–223 (HQTLGYRT). Residues asparagine 262 and asparagine 360 are each glycosylated (N-linked (GlcNAc...) asparagine; by host). A disordered region spans residues 428–457 (QNHLPRGRERRQAAGRRTASLQSGPQGDRI). 3 N-linked (GlcNAc...) asparagine; by host glycosylation sites follow: asparagine 579, asparagine 635, and asparagine 649. 2 hydrophobic membrane proximal region regions span residues 694 to 748 (IDTV…SFLS) and 724 to 744 (ALGT…SGIA). The chain crosses the membrane as a helical span at residues 751–771 (FAALAIGIAVVVSIILGLLAF). Residues 772-883 (KYVMNLKSNP…PSWAEESEDE (112 aa)) are Intravirion-facing. Positions 791–817 (PPAGTPPRPSRRYYKDEEEVEEDSDED) are disordered. Over residues 806-817 (DEEEVEEDSDED) the composition is skewed to acidic residues. The short motif at 868–871 (YPLL) is the Internalization motif element.

This sequence belongs to the herpesviridae glycoprotein B family. As to quaternary structure, homotrimer; disulfide-linked. Binds to heparan sulfate proteoglycans. Interacts with gH/gL heterodimer. A proteolytic cleavage by host furin generates two subunits that remain linked by disulfide bonds.

Its subcellular location is the virion membrane. It is found in the host cell membrane. It localises to the host endosome membrane. The protein localises to the host Golgi apparatus membrane. Functionally, envelope glycoprotein that forms spikes at the surface of virion envelope. Essential for the initial attachment to heparan sulfate moieties of the host cell surface proteoglycans. Involved in fusion of viral and cellular membranes leading to virus entry into the host cell. Following initial binding to its host receptors, membrane fusion is mediated by the fusion machinery composed at least of gB and the heterodimer gH/gL. May be involved in the fusion between the virion envelope and the outer nuclear membrane during virion egress. The protein is Envelope glycoprotein B of Infectious laryngotracheitis virus (strain SA-2) (ILTV).